Consider the following 299-residue polypeptide: Acetaldehyde dehydrogenase (299 aa).

The Acyl-thioester intermediate role is filled by C126. Residues 157–165 (SAGPGTRQN) and N267 each bind NAD(+).

The protein belongs to the acetaldehyde dehydrogenase family.

The enzyme catalyses acetaldehyde + NAD(+) + CoA = acetyl-CoA + NADH + H(+). The polypeptide is Acetaldehyde dehydrogenase (mhpF) (Carboxydothermus hydrogenoformans (strain ATCC BAA-161 / DSM 6008 / Z-2901)).